We begin with the raw amino-acid sequence, 315 residues long: Homoserine kinase (315 aa).

97-107 (PPARGLGSSAT) provides a ligand contact to ATP.

The protein belongs to the GHMP kinase family. Homoserine kinase subfamily.

It is found in the cytoplasm. The enzyme catalyses L-homoserine + ATP = O-phospho-L-homoserine + ADP + H(+). The protein operates within amino-acid biosynthesis; L-threonine biosynthesis; L-threonine from L-aspartate: step 4/5. In terms of biological role, catalyzes the ATP-dependent phosphorylation of L-homoserine to L-homoserine phosphate. The sequence is that of Homoserine kinase from Prochlorococcus marinus (strain MIT 9215).